Consider the following 593-residue polypeptide: Insulin-like growth factor 2 mRNA-binding protein 3-B (593 aa).

RRM domains lie at 2-75 (NKLY…HSVP) and 81-156 (RKLQ…YIPD). The segment at 159–208 (ATPQSPSQQLQQPQQQHPQGRRGFGQRGPARQGSPGAAARPKPQSEVPLR) is disordered. Positions 161–176 (PQSPSQQLQQPQQQHP) are enriched in low complexity. 2 KH domains span residues 204–269 (EVPL…CKII) and 285–352 (EIPL…EEEV). The span at 390–402 (SGMPPPSAGVSSP) shows a compositional bias: low complexity. The disordered stretch occupies residues 390–412 (SGMPPPSAGVSSPTTSASYPPFG). KH domains lie at 417–482 (SETV…QGRI) and 499–565 (KLEA…QRKI). A disordered region spans residues 571–593 (QVRRQQQQQQKTAQSGQPQPRRK).

This sequence belongs to the RRM IMP/VICKZ family. As to quaternary structure, homodimer and multimer. Associates with microtubules. Interaction with a translocation machinery protein TRAPA of the endoplasmic reticulum. Component of a mRNP complex, at least composed of DAZAP1, IGF2BP3, STAU and VgRBP60. The mRNP complex with DAZAP1, IGF2BP3, STAU and VgRBP60 is only found in the cytoplasm. Interacts with a hnRNP 1 related RNA transport protein VgRBP60 both in the nucleus (in an RNA-independent manner) and the cytoplasm (in an RNA-dependent manner). Found in a B3 activator complex. Expressed in oocytes, kidney and pancreas (at protein level). Expressed in oocytes, kidney and pancreas.

Its subcellular location is the nucleus. It is found in the cytoplasm. The protein resides in the endoplasmic reticulum. RNA-binding protein that acts as a regulator of mRNA transport and localization. Binds to the RNA sequence motif 5'-UUCAC-3'. Preferentially binds to N6-methyladenosine (m6A)-containing mRNAs and increases their stability. Mediates the specific association of Vg1 RNA to microtubules. May regulate mRNA translation. Binds specifically to the vegetal localization elements (VLE or VgLE) in the 3'-UTR of Vg1 and VegT mRNAs. Binds to the Vg1 and VegT mRNAs in both the nucleus and the cytoplasm. May regulate mRNA translation. Acts as a transcription regulator. Binds to the 5'-[TA]GGTTACT-3' motif within element 3 of the TFIIIA gene promoter. This is Insulin-like growth factor 2 mRNA-binding protein 3-B (igf2bp3-b) from Xenopus laevis (African clawed frog).